Here is a 351-residue protein sequence, read N- to C-terminus: Major capsid protein (351 aa).

This sequence belongs to the lambda phage major capsid protein family. Homomultimer.

It localises to the virion. It is found in the host cytoplasm. Functionally, assembles to form an icosahedral capsid. The assembly is primed by the interaction between capsid assembly protease and portal dodecamer, and major capsid proteins assemble cooperatively to form the procapsid with the help of capsid scaffolding protein. Major capsid protein forms hexons and pentons of the icosahedron. Viral genomic DNA is packaged into the procapsid through the portal vertex. The packaging triggers a dramatic reconfiguration of the capsid shell. The chain is Major capsid protein from Pseudomonas phage KPP10 (Bacteriophage KPP10).